The chain runs to 248 residues: PF03932 family protein CutC (248 aa).

The protein belongs to the CutC family. Homodimer.

It localises to the cytoplasm. This is PF03932 family protein CutC from Salmonella paratyphi A (strain AKU_12601).